Reading from the N-terminus, the 414-residue chain is Ciliary microtubule-associated protein 2 (414 aa).

The sequence is that of Ciliary microtubule-associated protein 2 (Cimap2) from Mus musculus (Mouse).